A 795-amino-acid chain; its full sequence is Phenylalanine--tRNA ligase beta subunit (795 aa).

Residues 39–148 enclose the tRNA-binding domain; that stretch reads AGSFHGVVVG…ADAPIGTDIR (110 aa). Residues 401–476 form the B5 domain; that stretch reads PKRATITLRR…RVYGYNNIPD (76 aa). The Mg(2+) site is built by Asp454, Asp460, Glu463, and Glu464. One can recognise an FDX-ACB domain in the interval 701-794; that stretch reads SRFPANRRDI…LKERFQASLR (94 aa).

Belongs to the phenylalanyl-tRNA synthetase beta subunit family. Type 1 subfamily. As to quaternary structure, tetramer of two alpha and two beta subunits. Mg(2+) is required as a cofactor.

The protein resides in the cytoplasm. It carries out the reaction tRNA(Phe) + L-phenylalanine + ATP = L-phenylalanyl-tRNA(Phe) + AMP + diphosphate + H(+). The sequence is that of Phenylalanine--tRNA ligase beta subunit (pheT) from Escherichia coli (strain K12).